The sequence spans 78 residues: Omega-conotoxin-like VnMKLT1-0111 (78 aa).

An N-terminal signal peptide occupies residues 1-22; the sequence is MKLTCMMIVAVLFLTAWTFVTA. Positions 23–48 are excised as a propeptide; it reads DSRNGLEYLFPKAHYEMNPEASKLNK. Disulfide bonds link Cys52–Cys69, Cys59–Cys73, and Cys68–Cys77.

It belongs to the conotoxin O1 superfamily. Expressed by the venom duct.

Its subcellular location is the secreted. Its function is as follows. Omega-conotoxins act at presynaptic membranes, they bind and block voltage-gated calcium channels (Cav). The sequence is that of Omega-conotoxin-like VnMKLT1-0111 from Conus ventricosus (Mediterranean cone).